The primary structure comprises 230 residues: Ribose-5-phosphate isomerase A (230 aa).

Substrate-binding positions include 28–31, 83–86, and 97–100; these read TGST, DGAD, and KGLG. Glu106 (proton acceptor) is an active-site residue. A substrate-binding site is contributed by Lys124.

This sequence belongs to the ribose 5-phosphate isomerase family. In terms of assembly, homodimer.

It carries out the reaction aldehydo-D-ribose 5-phosphate = D-ribulose 5-phosphate. It functions in the pathway carbohydrate degradation; pentose phosphate pathway; D-ribose 5-phosphate from D-ribulose 5-phosphate (non-oxidative stage): step 1/1. Its function is as follows. Catalyzes the reversible conversion of ribose-5-phosphate to ribulose 5-phosphate. This chain is Ribose-5-phosphate isomerase A, found in Gloeobacter violaceus (strain ATCC 29082 / PCC 7421).